Consider the following 124-residue polypeptide: Large ribosomal subunit protein bL21 (124 aa).

A disordered region spans residues 105–124 (TVKAEPKSKRAPAPEAAADA). Residues 115-124 (APAPEAAADA) show a composition bias toward low complexity.

The protein belongs to the bacterial ribosomal protein bL21 family. Part of the 50S ribosomal subunit. Contacts protein L20.

Its function is as follows. This protein binds to 23S rRNA in the presence of protein L20. This is Large ribosomal subunit protein bL21 from Xanthobacter autotrophicus (strain ATCC BAA-1158 / Py2).